The chain runs to 472 residues: Tryptophanase (472 aa).

At lysine 270 the chain carries N6-(pyridoxal phosphate)lysine.

It belongs to the beta-eliminating lyase family. In terms of assembly, homotetramer. Pyridoxal 5'-phosphate serves as cofactor.

It carries out the reaction L-tryptophan + H2O = indole + pyruvate + NH4(+). It participates in amino-acid degradation; L-tryptophan degradation via pyruvate pathway; indole and pyruvate from L-tryptophan: step 1/1. The polypeptide is Tryptophanase (tnaA) (Haemophilus influenzae).